Here is a 396-residue protein sequence, read N- to C-terminus: Elongation factor Tu (396 aa).

The 197-residue stretch at 10–206 (KPHVNVGTIG…ALDTYIPEPE (197 aa)) folds into the tr-type G domain. Residues 19–26 (GHVDHGKT) are G1. 19-26 (GHVDHGKT) lines the GTP pocket. Residue T26 coordinates Mg(2+). The tract at residues 60–64 (GITIN) is G2. The tract at residues 81–84 (DCPG) is G3. GTP contacts are provided by residues 81–85 (DCPGH) and 136–139 (NKCD). The tract at residues 136-139 (NKCD) is G4. The segment at 174–176 (SAL) is G5.

This sequence belongs to the TRAFAC class translation factor GTPase superfamily. Classic translation factor GTPase family. EF-Tu/EF-1A subfamily. As to quaternary structure, monomer.

It is found in the cytoplasm. The enzyme catalyses GTP + H2O = GDP + phosphate + H(+). Functionally, GTP hydrolase that promotes the GTP-dependent binding of aminoacyl-tRNA to the A-site of ribosomes during protein biosynthesis. This is Elongation factor Tu from Acinetobacter baylyi (strain ATCC 33305 / BD413 / ADP1).